We begin with the raw amino-acid sequence, 495 residues long: Probable cytosol aminopeptidase (495 aa).

Positions 264 and 269 each coordinate Mn(2+). Lysine 276 is a catalytic residue. Residues aspartate 287, aspartate 346, and glutamate 348 each coordinate Mn(2+). The active site involves arginine 350.

This sequence belongs to the peptidase M17 family. Mn(2+) serves as cofactor.

It is found in the cytoplasm. The catalysed reaction is Release of an N-terminal amino acid, Xaa-|-Yaa-, in which Xaa is preferably Leu, but may be other amino acids including Pro although not Arg or Lys, and Yaa may be Pro. Amino acid amides and methyl esters are also readily hydrolyzed, but rates on arylamides are exceedingly low.. It carries out the reaction Release of an N-terminal amino acid, preferentially leucine, but not glutamic or aspartic acids.. Functionally, presumably involved in the processing and regular turnover of intracellular proteins. Catalyzes the removal of unsubstituted N-terminal amino acids from various peptides. In Geotalea uraniireducens (strain Rf4) (Geobacter uraniireducens), this protein is Probable cytosol aminopeptidase.